The primary structure comprises 158 residues: C-type lectin BiL (158 aa).

Residues M1–G23 form the signal peptide. 4 disulfide bridges follow: C26–C37, C54–C154, C61–C156, and C129–C146. Residues M33–Q155 enclose the C-type lectin domain. The Ca(2+) site is built by Q119, D121, E127, N142, and D143. Positions Q119–D121 match the Galactose-binding motif.

Homodimer; disulfide-linked. In terms of tissue distribution, expressed by the venom gland.

The protein localises to the secreted. In terms of biological role, lectin with a hemagglutinating activity that is inhibited by galactose, lactose and EDTA. Is calcium-dependent. Shows effects on the renal function of isolated perfused rat kidneys by increasing both perfusion pressure (PP) and renal vascular resistance (RVR). In addition, the urinary flow and glomerular filtration rate (GFR) decreases significantly. The changes observed may reflect direct injury to the glomerular and tubular renal cells, and the rise in permeability in the glomerular endothelial cells, may be the effect of interactions of C-type lectin with endothelial cells or due to release of other mediators by mesangial, tubular and endothelial cells. This is C-type lectin BiL from Bothrops insularis (Golden lancehead).